We begin with the raw amino-acid sequence, 582 residues long: ATP-dependent lipid A-core flippase (582 aa).

5 helical membrane-spanning segments follow: residues alanine 25–leucine 45, leucine 69–isoleucine 89, alanine 137–methionine 159, proline 253–proline 273, and valine 275–methionine 295. An ABC transmembrane type-1 domain is found at isoleucine 28–arginine 310. The region spanning isoleucine 342 to methionine 578 is the ABC transporter domain. Glycine 376 to serine 383 lines the ATP pocket.

Belongs to the ABC transporter superfamily. Lipid exporter (TC 3.A.1.106) family. Homodimer.

The protein resides in the cell inner membrane. It carries out the reaction ATP + H2O + lipid A-core oligosaccharideSide 1 = ADP + phosphate + lipid A-core oligosaccharideSide 2.. Its function is as follows. Involved in lipopolysaccharide (LPS) biosynthesis. Translocates lipid A-core from the inner to the outer leaflet of the inner membrane. Transmembrane domains (TMD) form a pore in the inner membrane and the ATP-binding domain (NBD) is responsible for energy generation. This Yersinia pestis bv. Antiqua (strain Antiqua) protein is ATP-dependent lipid A-core flippase.